Reading from the N-terminus, the 1392-residue chain is DNA-directed RNA polymerase subunit beta'' (1392 aa).

Cys224, Cys295, Cys302, and Cys305 together coordinate Zn(2+).

This sequence belongs to the RNA polymerase beta' chain family. RpoC2 subfamily. In terms of assembly, in plastids the minimal PEP RNA polymerase catalytic core is composed of four subunits: alpha, beta, beta', and beta''. When a (nuclear-encoded) sigma factor is associated with the core the holoenzyme is formed, which can initiate transcription. Zn(2+) is required as a cofactor.

The protein resides in the plastid. It is found in the chloroplast. It catalyses the reaction RNA(n) + a ribonucleoside 5'-triphosphate = RNA(n+1) + diphosphate. Its function is as follows. DNA-dependent RNA polymerase catalyzes the transcription of DNA into RNA using the four ribonucleoside triphosphates as substrates. The sequence is that of DNA-directed RNA polymerase subunit beta'' from Solanum lycopersicum (Tomato).